We begin with the raw amino-acid sequence, 343 residues long: Mesaconyl-CoA hydratase (343 aa).

The MaoC-like domain maps to 47–116; that stretch reads SDEFARACGL…STVIGLKENS (70 aa). Substrate-binding positions include 60–63, 83–86, and 94–96; these read PVDE, VANL, and LKP.

The enzyme catalyses (2R,3S)-beta-methylmalyl-CoA = 2-methylfumaryl-CoA + H2O. Involved in the ethylmalonyl-CoA pathway for acetate assimilation. Catalyzes the reversible hydration of mesaconyl-CoA (2-methylfumaryl-CoA) to yield beta-methylmalyl-CoA ((2R,3S)-beta-methylmalyl-CoA). This is Mesaconyl-CoA hydratase (mch) from Cereibacter sphaeroides (strain ATCC 17023 / DSM 158 / JCM 6121 / CCUG 31486 / LMG 2827 / NBRC 12203 / NCIMB 8253 / ATH 2.4.1.) (Rhodobacter sphaeroides).